Reading from the N-terminus, the 420-residue chain is Acyl-coenzyme A amino acid N-acyltransferase 2 (420 aa).

Residues Ser-235, Asp-329, and His-363 each act as charge relay system in the active site. The Microbody targeting signal motif lies at 418 to 420 (SKL).

The protein belongs to the C/M/P thioester hydrolase family.

The protein localises to the peroxisome. Functionally, acyltransferase which efficiently conjugates very long-chain and long-chain fatty acids to taurine. Shows no conjugation activity in the presence of glycine. In Mus musculus (Mouse), this protein is Acyl-coenzyme A amino acid N-acyltransferase 2.